We begin with the raw amino-acid sequence, 360 residues long: 4-hydroxy-3-methylbut-2-en-1-yl diphosphate synthase (flavodoxin) (360 aa).

The [4Fe-4S] cluster site is built by cysteine 265, cysteine 268, cysteine 300, and glutamate 307.

Belongs to the IspG family. [4Fe-4S] cluster is required as a cofactor.

It carries out the reaction (2E)-4-hydroxy-3-methylbut-2-enyl diphosphate + oxidized [flavodoxin] + H2O + 2 H(+) = 2-C-methyl-D-erythritol 2,4-cyclic diphosphate + reduced [flavodoxin]. It participates in isoprenoid biosynthesis; isopentenyl diphosphate biosynthesis via DXP pathway; isopentenyl diphosphate from 1-deoxy-D-xylulose 5-phosphate: step 5/6. Converts 2C-methyl-D-erythritol 2,4-cyclodiphosphate (ME-2,4cPP) into 1-hydroxy-2-methyl-2-(E)-butenyl 4-diphosphate. The protein is 4-hydroxy-3-methylbut-2-en-1-yl diphosphate synthase (flavodoxin) of Brevibacillus brevis (strain 47 / JCM 6285 / NBRC 100599).